The sequence spans 248 residues: Ribosomal RNA small subunit methyltransferase A (248 aa).

S-adenosyl-L-methionine-binding residues include His-11, Leu-13, Gly-38, Glu-60, Asp-83, and Asn-101.

Belongs to the class I-like SAM-binding methyltransferase superfamily. rRNA adenine N(6)-methyltransferase family. RsmA subfamily.

It is found in the cytoplasm. It carries out the reaction adenosine(1518)/adenosine(1519) in 16S rRNA + 4 S-adenosyl-L-methionine = N(6)-dimethyladenosine(1518)/N(6)-dimethyladenosine(1519) in 16S rRNA + 4 S-adenosyl-L-homocysteine + 4 H(+). Specifically dimethylates two adjacent adenosines (A1518 and A1519) in the loop of a conserved hairpin near the 3'-end of 16S rRNA in the 30S particle. May play a critical role in biogenesis of 30S subunits. The polypeptide is Ribosomal RNA small subunit methyltransferase A (Aquifex aeolicus (strain VF5)).